The chain runs to 566 residues: Putative ABC transporter ATP-binding protein BT9727_2424 (566 aa).

ABC transporter domains follow at residues 5-246 (ISFE…GLRE) and 300-533 (LKVE…ANLK). Residues 39 to 46 (GRSGSGKS) and 333 to 340 (GHNGAGKS) contribute to the ATP site.

It belongs to the ABC transporter superfamily.

Its subcellular location is the cell membrane. Its function is as follows. Probably part of an ABC transporter complex. Responsible for energy coupling to the transport system. This is Putative ABC transporter ATP-binding protein BT9727_2424 from Bacillus thuringiensis subsp. konkukian (strain 97-27).